The chain runs to 81 residues: Photosystem I iron-sulfur center (81 aa).

4Fe-4S ferredoxin-type domains lie at Ala-2–Trp-31 and Met-39–Tyr-68. [4Fe-4S] cluster-binding residues include Cys-11, Cys-14, Cys-17, Cys-21, Cys-48, Cys-51, Cys-54, and Cys-58.

As to quaternary structure, the eukaryotic PSI reaction center is composed of at least 11 subunits. [4Fe-4S] cluster serves as cofactor.

It localises to the plastid. The protein resides in the chloroplast thylakoid membrane. The enzyme catalyses reduced [plastocyanin] + hnu + oxidized [2Fe-2S]-[ferredoxin] = oxidized [plastocyanin] + reduced [2Fe-2S]-[ferredoxin]. Its function is as follows. Apoprotein for the two 4Fe-4S centers FA and FB of photosystem I (PSI); essential for photochemical activity. FB is the terminal electron acceptor of PSI, donating electrons to ferredoxin. The C-terminus interacts with PsaA/B/D and helps assemble the protein into the PSI complex. Required for binding of PsaD and PsaE to PSI. PSI is a plastocyanin/cytochrome c6-ferredoxin oxidoreductase, converting photonic excitation into a charge separation, which transfers an electron from the donor P700 chlorophyll pair to the spectroscopically characterized acceptors A0, A1, FX, FA and FB in turn. The protein is Photosystem I iron-sulfur center of Cyanidioschyzon merolae (strain NIES-3377 / 10D) (Unicellular red alga).